A 220-amino-acid chain; its full sequence is Splicing factor U2AF 26 kDa subunit (220 aa).

Alanine 2 carries the N-acetylalanine modification. The C3H1-type 1 zinc-finger motif lies at 12–40 (EKDKVNCSFYFKIGACRHGDRCSRLHNKP). Positions 65–147 (SHCHVSDVEV…QAVHAELSPV (83 aa)) constitute an RRM domain. The C3H1-type 2 zinc-finger motif lies at 149–176 (DFRESCCRQYEMGECTRGGFCNFMHLRP). Residues 186–220 (YGRGPRRRSPPRSHTGHRPRERNRRRSPDHRHGRF) form a disordered region. Positions 189–220 (GPRRRSPPRSHTGHRPRERNRRRSPDHRHGRF) are enriched in basic residues.

This sequence belongs to the splicing factor SR family. As to quaternary structure, interacts with GFI1, U2AF2 and C1QBP.

The protein localises to the nucleus. It localises to the nucleus speckle. The protein resides in the cytoplasm. Functionally, RNA-binding protein that function as a pre-mRNA splicing factor. Plays a critical role in both constitutive and enhancer-dependent splicing by mediating protein-protein interactions and protein-RNA interactions required for accurate 3'-splice site selection. Acts by enhancing the binding of U2AF2 to weak pyrimidine tracts. Also participates in the regulation of alternative pre-mRNA splicing. Activates exon 5 skipping of PTPRC during T-cell activation; an event reversed by GFI1. Binds to RNA at the AG dinucleotide at the 3'-splice site. Shows a preference for AGC or AGA. The protein is Splicing factor U2AF 26 kDa subunit (U2AF1L4) of Bos taurus (Bovine).